We begin with the raw amino-acid sequence, 506 residues long: Aerotaxis receptor (506 aa).

The Cytoplasmic segment spans residues 1–166 (MSSHPYVTQQ…PSLPLRWRAR (166 aa)). Residues 167-186 (GVMTLMFILLAAMLWFVAAP) form a helical membrane-spanning segment. The Periplasmic segment spans residues 187–190 (VVTY). A helical membrane pass occupies residues 191-209 (ILCALVVLLASACFEWQIV). Residues 210 to 506 (RPIENVAHQA…RLEDAVTVLH (297 aa)) lie on the Cytoplasmic side of the membrane. In terms of domain architecture, Methyl-accepting transducer spans 263 to 492 (QVSSVRNGSE…ESAQVSAMVK (230 aa)).

Belongs to the methyl-accepting chemotaxis (MCP) protein family.

Its subcellular location is the cell inner membrane. In terms of biological role, signal transducer for aerotaxis. The aerotactic response is the accumulation of cells around air bubbles. The nature of the sensory stimulus detected by this protein is the proton motive force or cellular redox state. It uses a FAD prosthetic group as a redox sensor to monitor oxygen levels. In Escherichia coli (strain K12), this protein is Aerotaxis receptor (aer).